A 1593-amino-acid chain; its full sequence is DNA-directed RNA polymerase subunit beta' (1593 aa).

4 residues coordinate Zn(2+): Cys74, Cys76, Cys89, and Cys92. Residues Asp648, Asp650, and Asp652 each contribute to the Mg(2+) site. Zn(2+) contacts are provided by Cys1026, Cys1100, Cys1107, and Cys1110.

This sequence belongs to the RNA polymerase beta' chain family. In terms of assembly, the RNAP catalytic core consists of 2 alpha, 1 beta, 1 beta' and 1 omega subunit. When a sigma factor is associated with the core the holoenzyme is formed, which can initiate transcription. Mg(2+) serves as cofactor. Zn(2+) is required as a cofactor.

The enzyme catalyses RNA(n) + a ribonucleoside 5'-triphosphate = RNA(n+1) + diphosphate. Functionally, DNA-dependent RNA polymerase catalyzes the transcription of DNA into RNA using the four ribonucleoside triphosphates as substrates. The chain is DNA-directed RNA polymerase subunit beta' from Endomicrobium trichonymphae.